Consider the following 341-residue polypeptide: Short chain dehydrogenase FGM9 (341 aa).

Residues Leu-38, Lys-63, Asp-88, and Asn-114 each coordinate NADP(+). Catalysis depends on proton donor residues Ser-167 and Tyr-200. Residues Tyr-200 and Lys-204 each contribute to the NADP(+) site. Catalysis depends on Lys-204, which acts as the Lowers pKa of active site Tyr.

It belongs to the short-chain dehydrogenases/reductases (SDR) family.

Its pathway is secondary metabolite biosynthesis. Short chain dehydrogenase; part of the Fg3_54/C64 gene cluster that mediates the biosynthesis of the octapeptide fusaoctaxin A, a virulence factor that is required for cell-to-cell invasiveness of plant host. The 2 nonribosomal peptide synthetases NRPS9 and NRPS5 form an assembly line which likely utilizes GABA as a starter unit (loaded on the unique module M1 of NRPS9) and sequentially incorporates seven extender units composed of the residues L-Ala, L-allo-Ile, L-Ser, L-Val, L-Ser, L-Leu and L-Leu, respectively. During the process, each of the residues that are tethered on modules M3-M7 of NRPS5 containing an E domain can undergo an epimerization reaction to produce a D-configuration before the transpeptidation reaction occurs. The elongation of the peptidyl chain might be terminated by module M8-mediated L-Leu incorporation, followed by R domain-catalyzed 4 electron reduction to release the resulting octapeptide from the assembly line as an alcohol. Fusaoctaxin A is cleaved by the cluster specific ABC transporter FGM5 to the pentapeptide fusapentaxin A and the tripeptide fusatrixin A. The other enzymes from the cluster, FGM1, FGM2, FGM3 and FGM9 seem not to be involved in the biosynthesis of fusaoctaxin A and their functions have still to be determined. The polypeptide is Short chain dehydrogenase FGM9 (Gibberella zeae (strain ATCC MYA-4620 / CBS 123657 / FGSC 9075 / NRRL 31084 / PH-1) (Wheat head blight fungus)).